Reading from the N-terminus, the 257-residue chain is Cobalt transport protein CbiM (257 aa).

The first 33 residues, 1-33 (MVKPTQAKRYASLGAIALLTTSLVVASPNPALA), serve as a signal peptide directing secretion. A run of 6 helical transmembrane segments spans residues 39-59 (GFLPLGWAVGWWLAFLPFLAW), 74-94 (SVLLVALAGAYAFVVSSLKIP), 117-137 (LMAVLGTLVLLFQSLLIAHGG), 138-158 (LTTLGANAFSMAVVGPWLAWL), 171-191 (AIALFAASFISNVGTYTLTSL), and 214-234 (LFAVTQIPLAISEGLLTVLVW).

This sequence belongs to the CbiM family. In terms of assembly, forms an energy-coupling factor (ECF) transporter complex composed of an ATP-binding protein (A component, CbiO), a transmembrane protein (T component, CbiQ) and 2 possible substrate-capture proteins (S components, CbiM and CbiN) of unknown stoichimetry.

Its subcellular location is the cell inner membrane. The protein operates within cofactor biosynthesis; adenosylcobalamin biosynthesis. Functionally, part of the energy-coupling factor (ECF) transporter complex CbiMNOQ involved in cobalt import. The chain is Cobalt transport protein CbiM from Thermosynechococcus vestitus (strain NIES-2133 / IAM M-273 / BP-1).